The following is a 315-amino-acid chain: Ribosomal RNA small subunit methyltransferase H (315 aa).

Residues 33 to 35, D52, F84, D106, and Q113 contribute to the S-adenosyl-L-methionine site; that span reads GGH. The disordered stretch occupies residues 295–315; the sequence is SDELEENNRSHSAKLRVAEKL.

The protein belongs to the methyltransferase superfamily. RsmH family.

The protein resides in the cytoplasm. The enzyme catalyses cytidine(1402) in 16S rRNA + S-adenosyl-L-methionine = N(4)-methylcytidine(1402) in 16S rRNA + S-adenosyl-L-homocysteine + H(+). Specifically methylates the N4 position of cytidine in position 1402 (C1402) of 16S rRNA. In Lactobacillus gasseri (strain ATCC 33323 / DSM 20243 / BCRC 14619 / CIP 102991 / JCM 1131 / KCTC 3163 / NCIMB 11718 / NCTC 13722 / AM63), this protein is Ribosomal RNA small subunit methyltransferase H.